A 222-amino-acid chain; its full sequence is UPF0758 protein TM_1557 (222 aa).

The MPN domain maps to 101–222; that stretch reads KLDSSVKVYK…YFSFREEGEL (122 aa). Zn(2+) is bound by residues His-171, His-173, and Asp-184. The JAMM motif signature appears at 171–184; sequence HNHPSGDPTPSKED.

This sequence belongs to the UPF0758 family.

In Thermotoga maritima (strain ATCC 43589 / DSM 3109 / JCM 10099 / NBRC 100826 / MSB8), this protein is UPF0758 protein TM_1557.